A 1790-amino-acid chain; its full sequence is Intracellular protein transport protein USO1 (1790 aa).

The tract at residues 1–724 (MDIIQGLIQQ…LSHDPDEEPI (724 aa)) is globular head. ARM repeat units follow at residues 45 to 89 (AFSR…LFIR), 127 to 170 (QFSL…AVMA), 173 to 213 (PLKA…MAVV), 215 to 260 (DSPH…NILK), 261 to 312 (YNTS…VSLT), 314 to 362 (EPGN…NMVR), 363 to 429 (SNEH…LKAY), 431 to 512 (MDNF…PFKL), 543 to 584 (GNDL…LIYW), and 586 to 630 (FGDF…LGVA). Residues 452–484 (TNNVGDNAKENGGSNKSDKESDSDKDTDGKDGT) are disordered. A charged (hyper-hydrophilic) region spans residues 465 to 487 (SNKSDKESDSDKDTDGKDGTEYE). Residues 467-484 (KSDKESDSDKDTDGKDGT) are compositionally biased toward basic and acidic residues. Positions 725–1790 (NKISFEEVEK…EEDEEEGQVA (1066 aa)) form a coiled coil. The segment at 991 to 1790 (ESSIQLSNLQ…EEDEEEGQVA (800 aa)) is dispensable for the protein function. Disordered regions lie at residues 1185 to 1221 (EITSTQQENESIKKKNDELEGEVKAMKSTSEEQSNLK), 1326 to 1351 (KEKSESELSRLKKTSSEERKNAEEQL), 1485 to 1547 (GLKK…EDIK), 1645 to 1667 (QELDSTQQKAQKSEEERRAEVRK), 1722 to 1742 (DNLKAENSKLKEANEDRSEID), and 1762 to 1790 (LKDLGVEISSDEEDDEEDDEEDEEEGQVA). Over residues 1194–1209 (ESIKKKNDELEGEVKA) the composition is skewed to basic and acidic residues. Composition is skewed to basic and acidic residues over residues 1485–1512 (GLKKLEEESSKEKAELEKSKEMMKKLES), 1519–1547 (TELKSSMETIRKSDEKLEQSKKSAEEDIK), 1655–1667 (QKSEEERRAEVRK), and 1722–1738 (DNLKAENSKLKEANEDR). Phosphoserine is present on S1770. Residues 1770–1790 (SSDEEDDEEDDEEDEEEGQVA) show a composition bias toward acidic residues.

Belongs to the VDP/USO1/EDE1 family. Homodimer. Dimerizes by parallel association of the tails, resulting in an elongated structure with two globular head domains side by side, and a long rod-like tail structure.

It localises to the cytoplasm. The protein resides in the cytoskeleton. It is found in the cytoplasmic vesicle membrane. The protein localises to the endoplasmic reticulum membrane. Its subcellular location is the golgi apparatus membrane. Required for protein transport from the ER to the Golgi complex. In Saccharomyces cerevisiae (strain ATCC 204508 / S288c) (Baker's yeast), this protein is Intracellular protein transport protein USO1 (USO1).